We begin with the raw amino-acid sequence, 309 residues long: Ubiquitin domain-containing protein UBFD1 (309 aa).

Positions M1–G80 are disordered. The segment covering G9 to A19 has biased composition (acidic residues). Low complexity predominate over residues E35–A57. Positions E84 to D159 constitute a Ubiquitin-like domain. The tract at residues Q171–P204 is disordered. Composition is skewed to basic and acidic residues over residues A174–C185 and K192–D201.

As to quaternary structure, binds polyubiquitin.

In terms of biological role, may play a role as NF-kappa-B regulator. The protein is Ubiquitin domain-containing protein UBFD1 (UBFD1) of Homo sapiens (Human).